The sequence spans 140 residues: Auxin-responsive protein IAA26 (140 aa).

Positions 1-40 (MASYGDDGVELTELTLGPPGASARRARRGRKNGHPPPSSS) are disordered. The short motif at 14–18 (LTLGP) is the EAR-like (transcriptional repression) element. Basic residues predominate over residues 24-33 (RRARRGRKNG). Residues 45–130 (AYFVKVSMDG…SCKRMRVMRA (86 aa)) form the PB1 domain.

This sequence belongs to the Aux/IAA family. In terms of assembly, homodimers and heterodimers. Expressed in roots, seedlings and flowers.

It is found in the nucleus. Aux/IAA proteins are short-lived transcriptional factors that function as repressors of early auxin response genes at low auxin concentrations. The chain is Auxin-responsive protein IAA26 (IAA26) from Oryza sativa subsp. japonica (Rice).